The following is a 523-amino-acid chain: Glycine betaine transporter 1 (523 aa).

A run of 12 helical transmembrane segments spans residues valine 33–alanine 53, phenylalanine 71–valine 91, serine 109–tryptophan 129, phenylalanine 165–phenylalanine 185, isoleucine 214–glycine 234, glycine 251–valine 271, methionine 286–glycine 306, tryptophan 337–alanine 357, valine 372–isoleucine 392, valine 420–isoleucine 440, valine 467–glutamate 487, and alanine 496–methionine 516.

The protein belongs to the BCCT transporter (TC 2.A.15) family.

The protein resides in the cell inner membrane. Involved in the uptake of the osmoprotectant glycine betaine. This Vibrio parahaemolyticus serotype O3:K6 (strain RIMD 2210633) protein is Glycine betaine transporter 1.